The primary structure comprises 201 residues: Small ribosomal subunit protein uS4c (201 aa).

The segment at 17 to 44 (ALPGLTNKKPRTGSDLRNQSRSGKKSQY) is disordered. The S4 RNA-binding domain occupies 89-149 (MRLDNILFRL…DEQKSRALIQ (61 aa)).

The protein belongs to the universal ribosomal protein uS4 family. Part of the 30S ribosomal subunit. Contacts protein S5. The interaction surface between S4 and S5 is involved in control of translational fidelity.

It localises to the plastid. The protein localises to the chloroplast. One of the primary rRNA binding proteins, it binds directly to 16S rRNA where it nucleates assembly of the body of the 30S subunit. Functionally, with S5 and S12 plays an important role in translational accuracy. This is Small ribosomal subunit protein uS4c (rps4) from Atropa belladonna (Belladonna).